A 264-amino-acid chain; its full sequence is Thymidylate synthase (264 aa).

R21 is a binding site for dUMP. H51 contributes to the (6R)-5,10-methylene-5,6,7,8-tetrahydrofolate binding site. 126–127 provides a ligand contact to dUMP; that stretch reads RR. Residue C146 is the Nucleophile of the active site. Residues 166-169, N177, and 207-209 contribute to the dUMP site; these read RSAD and HLY. D169 is a (6R)-5,10-methylene-5,6,7,8-tetrahydrofolate binding site. A263 provides a ligand contact to (6R)-5,10-methylene-5,6,7,8-tetrahydrofolate.

Belongs to the thymidylate synthase family. Bacterial-type ThyA subfamily. As to quaternary structure, homodimer.

Its subcellular location is the cytoplasm. It carries out the reaction dUMP + (6R)-5,10-methylene-5,6,7,8-tetrahydrofolate = 7,8-dihydrofolate + dTMP. It functions in the pathway pyrimidine metabolism; dTTP biosynthesis. In terms of biological role, catalyzes the reductive methylation of 2'-deoxyuridine-5'-monophosphate (dUMP) to 2'-deoxythymidine-5'-monophosphate (dTMP) while utilizing 5,10-methylenetetrahydrofolate (mTHF) as the methyl donor and reductant in the reaction, yielding dihydrofolate (DHF) as a by-product. This enzymatic reaction provides an intracellular de novo source of dTMP, an essential precursor for DNA biosynthesis. The protein is Thymidylate synthase of Methylorubrum extorquens (strain CM4 / NCIMB 13688) (Methylobacterium extorquens).